Here is a 425-residue protein sequence, read N- to C-terminus: E3 ubiquitin-protein ligase CBLL2 (425 aa).

The RING-type zinc-finger motif lies at 57 to 97; sequence CDKCDLPIKIYGRIIPCKHAFCYHCANLYDKVGYKVCPRCR. The interval 96 to 154 is HYB domain; it reads CRYPVLRIEAHKRGSVFMCSIVQQCKRTYLSQKSLQAHIKRRHKRARKQVTSASLEKVR. The C2H2-type zinc finger occupies 112 to 138; that stretch reads FMCSIVQQCKRTYLSQKSLQAHIKRRH. Disordered regions lie at residues 241 to 297 and 382 to 425; these read DHIQ…HQMP and TDAM…HRRY. Over residues 398–408 the composition is skewed to pro residues; that stretch reads PCPPTRSPPPS. The span at 412-425 shows a compositional bias: basic residues; sequence GRSHHSHQRRHRRY.

In terms of assembly, homodimer. Exclusively expressed in testis and sperm, including spermatocytes, round and elongated spermatids, and Leydig cells.

It is found in the cytoplasm. The catalysed reaction is S-ubiquitinyl-[E2 ubiquitin-conjugating enzyme]-L-cysteine + [acceptor protein]-L-lysine = [E2 ubiquitin-conjugating enzyme]-L-cysteine + N(6)-ubiquitinyl-[acceptor protein]-L-lysine.. Its pathway is protein modification; protein ubiquitination. In terms of biological role, E3 ubiquitin ligase catalyzing the covalent attachment of ubiquitin moieties onto substrate proteins. May operate on tyrosine-phosphorylated SRC substrates. This chain is E3 ubiquitin-protein ligase CBLL2, found in Homo sapiens (Human).